A 655-amino-acid polypeptide reads, in one-letter code: Probable alpha-galactosidase D (655 aa).

An N-terminal signal peptide occupies residues methionine 1–alanine 16. 2 N-linked (GlcNAc...) asparagine glycosylation sites follow: asparagine 87 and asparagine 93. Residues cysteine 126 and cysteine 153 are joined by a disulfide bond. Residue aspartate 151 is the Nucleophile of the active site. Glutamate 196–aspartate 200 provides a ligand contact to substrate. Aspartate 218 serves as the catalytic Proton donor. N-linked (GlcNAc...) asparagine glycosylation is found at asparagine 432, asparagine 482, asparagine 502, asparagine 540, and asparagine 579.

The protein belongs to the glycosyl hydrolase 27 family.

Its subcellular location is the secreted. It catalyses the reaction Hydrolysis of terminal, non-reducing alpha-D-galactose residues in alpha-D-galactosides, including galactose oligosaccharides, galactomannans and galactolipids.. Its function is as follows. Hydrolyzes a variety of simple alpha-D-galactoside as well as more complex molecules such as oligosaccharides and polysaccharides. The sequence is that of Probable alpha-galactosidase D (aglD) from Aspergillus terreus (strain NIH 2624 / FGSC A1156).